A 316-amino-acid polypeptide reads, in one-letter code: MVETQMDKLGFLLNHIGKQITTKVLSNAHITQNMKEIILEKDSVDGGAAKNVSKGKSSPKEKKHWTEFESWEQLSKSKRSFKEYWAERNEIVNTLLLNWDNVRGALKKFLNDDREWCGRINMINGVPEIVEIIPSPYKAGENIYFGSEAMIPAEIYSRVANKPAMFVFHTHPNLGSCCGGMPSICDISTTLRYLLMGWTAGHLIISSNQVGMLTVDKRIIIDLWANENPRWLMAQKILDIFMMLTSRRSLVHPWTLRDLKKILQDYGIEYIIFPSNDFFIYEDERLLMFSKKWTNFFTLHELLDDLETIETKASST.

Belongs to the asfivirus F317L family.

It localises to the virion. This is an uncharacterized protein from Ornithodoros (relapsing fever ticks).